The sequence spans 341 residues: uncharacterized protein (341 aa).

This sequence belongs to the Gfo/Idh/MocA family.

This is an uncharacterized protein from Bacillus subtilis (strain 168).